Consider the following 993-residue polypeptide: Structural polyprotein (993 aa).

D11 provides a ligand contact to a divalent metal cation. A Peptidase S50 domain is found at 494–736 (ADKGYEVVAN…AGRQYHLAMA (243 aa)). The active-site Nucleophile is the S633. The active site involves K673. The tract at residues 950 to 993 (AMEMKHRNPRRALPKPKPKPNAPTQRPPGRLGRWIRTVSDEDLE) is disordered. The segment covering 956 to 967 (RNPRRALPKPKP) has biased composition (basic residues). The segment at 984-993 (IRTVSDEDLE) is interaction with VP1 protein.

As to quaternary structure, homotrimer. A central divalent metal stabilizes the VP2 trimer. Interacts with host ITGA4/ITGB1. In terms of assembly, homodimer. Interacts (via C-terminus) with VP1 in the cytoplasm. Interacts with VP2. In terms of processing, specific enzymatic cleavages yield mature proteins. The capsid assembly seems to be regulated by polyprotein processing. The protease VP4 cleaves itself off the polyprotein, thus releasing pre-VP2 and VP3 within the infected cell. During capsid assembly, the C-terminus of pre-VP2 is further processed by VP4, giving rise to VP2, the external capsid protein and three small peptides that all stay closely associated with the capsid.

It localises to the virion. The protein resides in the host cytoplasm. Capsid protein VP2 self assembles to form an icosahedral capsid with a T=13 symmetry, about 70 nm in diameter, and consisting of 260 VP2 trimers. The capsid encapsulates the genomic dsRNA. VP2 is also involved in attachment and entry into the host cell by interacting with host ITGA4/ITGB1. Its function is as follows. The precursor of VP2 plays an important role in capsid assembly. First, pre-VP2 and VP2 oligomers assemble to form a procapsid. Then, the pre-VP2 intermediates may be processed into VP2 proteins by proteolytic cleavage mediated by VP4 to obtain the mature virion. The final capsid is composed of pentamers and hexamers but VP2 has a natural tendency to assemble into all-pentameric structures. Therefore pre-VP2 may be required to allow formation of the hexameric structures. Functionally, protease VP4 is a serine protease that cleaves the polyprotein into its final products. Pre-VP2 is first partially cleaved, and may be completely processed by VP4 upon capsid maturation. In terms of biological role, capsid protein VP3 plays a key role in virion assembly by providing a scaffold for the capsid made of VP2. May self-assemble to form a T=4-like icosahedral inner-capsid composed of at least 180 trimers. Plays a role in genomic RNA packaging by recruiting VP1 into the capsid and interacting with the dsRNA genome segments to form a ribonucleoprotein complex. Additionally, the interaction of the VP3 C-terminal tail with VP1 removes the inherent structural blockade of the polymerase active site. Thus, VP3 can also function as a transcriptional activator. Structural peptide 1 is a small peptide derived from pre-VP2 C-terminus. It destabilizes and perforates cell membranes, suggesting a role during entry. Its function is as follows. Structural peptide 2 is a small peptide derived from pVP2 C-terminus. It is not essential for the virus viability, but viral growth is affected when missing. Functionally, structural peptide 3 is a small peptide derived from pVP2 C-terminus. It is not essential for the virus viability, but viral growth is affected when missing. In terms of biological role, structural peptide 4 is a small peptide derived from pVP2 C-terminus. It is essential for the virus viability. The sequence is that of Structural polyprotein from Avian infectious bursal disease virus (strain PBG-98) (IBDV).